A 583-amino-acid chain; its full sequence is cAMP-dependent protein kinase catalytic subunit 3 (583 aa).

Disordered regions lie at residues alanine 51–lysine 75 and serine 98–lysine 264. Composition is skewed to polar residues over residues threonine 52–proline 69 and serine 98–leucine 107. The segment covering threonine 108 to serine 162 has biased composition (low complexity). Residues aspartate 163–glutamine 176 are compositionally biased toward acidic residues. The span at proline 181–serine 200 shows a compositional bias: low complexity. The segment covering asparagine 205 to glycine 219 has biased composition (acidic residues). The span at glycine 221–serine 234 shows a compositional bias: basic and acidic residues. Acidic residues predominate over residues glutamate 235–glutamate 256. A Protein kinase domain is found at tyrosine 274–phenylalanine 528. ATP-binding positions include valine 280–valine 288 and lysine 303. Aspartate 397 acts as the Proton acceptor in catalysis. The AGC-kinase C-terminal domain maps to lysine 529 to phenylalanine 583.

Belongs to the protein kinase superfamily. AGC Ser/Thr protein kinase family. cAMP subfamily. Expressed in embryonic mesoderm, and the optic lamina, wing disk and leg disks of third instar larvae. More abundant in adult head than adult body.

The enzyme catalyses L-seryl-[protein] + ATP = O-phospho-L-seryl-[protein] + ADP + H(+). It catalyses the reaction L-threonyl-[protein] + ATP = O-phospho-L-threonyl-[protein] + ADP + H(+). Functionally, does not have an essential role in development. This Drosophila melanogaster (Fruit fly) protein is cAMP-dependent protein kinase catalytic subunit 3 (Pka-C3).